Here is a 456-residue protein sequence, read N- to C-terminus: Pantothenate kinase 2, mitochondrial (456 aa).

The disordered stretch occupies residues 16–89 (AGRFGAPMER…TSAGRPRAEG (74 aa)). Low complexity-rich tracts occupy residues 28–39 (RAAATSAAVGES) and 55–65 (SSAAPSGSGEA). 3 positions are modified to phosphoserine: Ser55, Ser56, and Ser75. Residues 154-161 (LELKDLTL) carry the Nuclear export signal motif. The Proton acceptor role is filled by Glu224. Residues Ser278, Ser281, and Arg293 each contribute to the acetyl-CoA site.

This sequence belongs to the type II pantothenate kinase family. Homodimer.

It is found in the cytoplasm. It localises to the cytosol. The enzyme catalyses (R)-pantothenate + ATP = (R)-4'-phosphopantothenate + ADP + H(+). It participates in cofactor biosynthesis; coenzyme A biosynthesis; CoA from (R)-pantothenate: step 1/5. Inhibited by acetyl-CoA. Inhibited by calcium hopantenate. Activated by palmitoylcarnitine. Functionally, catalyzes the phosphorylation of pantothenate to generate 4'-phosphopantothenate in the first and rate-determining step of coenzyme A (CoA) synthesis. The polypeptide is Pantothenate kinase 2, mitochondrial (Pank2) (Mus musculus (Mouse)).